The following is a 1521-amino-acid chain: Suppressor of Ty 6 homolog (1521 aa).

The tract at residues 1-238 is disordered; sequence MDFIDNQAEE…EEIIEDDGEG (238 aa). Positions 26–41 are enriched in basic residues; the sequence is KKMKMAKEKSKRKKKM. The short motif at 26 to 42 is the Nuclear localization signal element; that stretch reads KKMKMAKEKSKRKKKMV. Acidic residues-rich tracts occupy residues 45 to 56 and 67 to 76; these read SDEDEDDDDDEE and ADDDDEEEDA. Residues 77–89 are compositionally biased toward basic and acidic residues; that stretch reads KSEKSEKSRHSGE. A compositionally biased stretch (acidic residues) spans 90 to 99; the sequence is DELDDEDLDL. Over residues 126-157 the composition is skewed to basic and acidic residues; sequence PIRRPNHEDDDLLSERGSDDGDRRKDRGRGDR. Acidic residues-rich tracts occupy residues 166-176, 191-200, and 209-238; these read RSEDDFIEDDG, NLPEGAEDDA, and FNLDEFYDDDDGEDGLEDEEEEIIEDDGEG. Residues 1183–1252 form the S1 motif domain; sequence LGDSRQGGCP…ERFSLFLSCK (70 aa). The region spanning 1300-1389 is the SH2 domain; the sequence is HPNFHNVSYE…IARFVQPMIQ (90 aa).

This sequence belongs to the SPT6 family. Interacts with glp-1 and lin-12. Abundant in embryos, and less abundant in larvae.

Its subcellular location is the nucleus. Histone H3-H4 chaperone that plays a role in maintenance of chromatin structure during RNA polymerase II transcription elongation. Required for several aspects of morphogenesis of C.elegans, including regulation of division in the germline and gut and specification of ventral-uterine precursor cell fate. This is Suppressor of Ty 6 homolog (emb-5) from Caenorhabditis elegans.